A 376-amino-acid chain; its full sequence is Phytanoyl-CoA hydroxylase-interacting protein-like (376 aa).

A phosphoserine mark is found at Ser-12 and Ser-15. Asn-23 carries an N-linked (GlcNAc...) asparagine glycan. The residue at position 25 (Ser-25) is a Phosphoserine. Asn-37 is a glycosylation site (N-linked (GlcNAc...) asparagine). The Fibronectin type-III domain maps to 52–161; that stretch reads VPHNIKISNI…EIIEFCTADY (110 aa).

Belongs to the PHYHIP family.

May play a role in the development of the central system. The chain is Phytanoyl-CoA hydroxylase-interacting protein-like (PHYHIPL) from Homo sapiens (Human).